Consider the following 399-residue polypeptide: Chorismate synthase (399 aa).

R40 and R46 together coordinate NADP(+). FMN-binding positions include 135-137 (RAS), 256-257 (QA), G301, 316-320 (KPIAT), and R342.

The protein belongs to the chorismate synthase family. In terms of assembly, homotetramer. Requires FMNH2 as cofactor.

The enzyme catalyses 5-O-(1-carboxyvinyl)-3-phosphoshikimate = chorismate + phosphate. It functions in the pathway metabolic intermediate biosynthesis; chorismate biosynthesis; chorismate from D-erythrose 4-phosphate and phosphoenolpyruvate: step 7/7. Catalyzes the anti-1,4-elimination of the C-3 phosphate and the C-6 proR hydrogen from 5-enolpyruvylshikimate-3-phosphate (EPSP) to yield chorismate, which is the branch point compound that serves as the starting substrate for the three terminal pathways of aromatic amino acid biosynthesis. This reaction introduces a second double bond into the aromatic ring system. This Pseudarthrobacter chlorophenolicus (strain ATCC 700700 / DSM 12829 / CIP 107037 / JCM 12360 / KCTC 9906 / NCIMB 13794 / A6) (Arthrobacter chlorophenolicus) protein is Chorismate synthase.